Reading from the N-terminus, the 691-residue chain is NADH-ubiquinone oxidoreductase 75 kDa subunit (691 aa).

One can recognise a 2Fe-2S ferredoxin-type domain in the interval 1-78; it reads MVNVFVDGLS…NMKIFTNTPL (78 aa). C34, C45, C48, and C62 together coordinate [2Fe-2S] cluster. Residues 78–117 form the 4Fe-4S His(Cys)3-ligated-type domain; the sequence is LVKKAREGVLEFLLVNHPLDCPICDQGGECDLQDLTMVYG. H94, C98, C101, C107, C146, C149, C152, and C196 together coordinate [4Fe-4S] cluster. In terms of domain architecture, 4Fe-4S Mo/W bis-MGD-type spans 215–271; the sequence is LQSTESIDVSDAIGSNIRIDVRGSEIMRILPRLNEDVNEEWISDKARFCYDGLKRQR.

Belongs to the complex I 75 kDa subunit family. As to quaternary structure, complex I is composed of about 30 different subunits. [2Fe-2S] cluster serves as cofactor. Requires [4Fe-4S] cluster as cofactor.

The protein localises to the mitochondrion inner membrane. The enzyme catalyses a ubiquinone + NADH + 5 H(+)(in) = a ubiquinol + NAD(+) + 4 H(+)(out). In terms of biological role, core subunit of the mitochondrial membrane respiratory chain NADH dehydrogenase (Complex I) that is believed to belong to the minimal assembly required for catalysis. Complex I functions in the transfer of electrons from NADH to the respiratory chain. The immediate electron acceptor for the enzyme is believed to be ubiquinone. This is the largest subunit of complex I and it is a component of the iron-sulfur (IP) fragment of the enzyme. It may form part of the active site crevice where NADH is oxidized. This is NADH-ubiquinone oxidoreductase 75 kDa subunit (NAD11) from Reclinomonas americana.